The primary structure comprises 375 residues: Histidine biosynthesis bifunctional protein HisB (375 aa).

The segment at 1-168 (MTPIVFIDRD…GIAHTLADAP (168 aa)) is histidinol-phosphatase. Aspartate 8 serves as the catalytic Nucleophile. Mg(2+) is bound by residues aspartate 8, aspartate 10, and aspartate 128. Aspartate 10 acts as the Proton donor in catalysis. The interval 169–375 (RRAVVQRHTK…HVLPSTKGAL (207 aa)) is imidazoleglycerol-phosphate dehydratase.

This sequence in the N-terminal section; belongs to the histidinol-phosphatase family. It in the C-terminal section; belongs to the imidazoleglycerol-phosphate dehydratase family. Mg(2+) serves as cofactor.

It localises to the cytoplasm. The catalysed reaction is D-erythro-1-(imidazol-4-yl)glycerol 3-phosphate = 3-(imidazol-4-yl)-2-oxopropyl phosphate + H2O. The enzyme catalyses L-histidinol phosphate + H2O = L-histidinol + phosphate. It functions in the pathway amino-acid biosynthesis; L-histidine biosynthesis; L-histidine from 5-phospho-alpha-D-ribose 1-diphosphate: step 6/9. It participates in amino-acid biosynthesis; L-histidine biosynthesis; L-histidine from 5-phospho-alpha-D-ribose 1-diphosphate: step 8/9. This Xylella fastidiosa (strain 9a5c) protein is Histidine biosynthesis bifunctional protein HisB.